Here is a 205-residue protein sequence, read N- to C-terminus: Auxin-responsive protein IAA8 (205 aa).

Residues 1-48 (MECMASTEESLPASSSMDSCSGELPTTTTTAPAQSTASSGCRPPATAA) form a disordered region. Over residues 7–19 (TEESLPASSSMDS) the composition is skewed to polar residues. Low complexity predominate over residues 25–39 (PTTTTTAPAQSTASS). An EAR-like (transcriptional repression) motif is present at residues 58–62 (LRLGL). The interval 71-98 (DGNNPSTPRSSLTTATVTADRGGGGGGH) is disordered. The segment covering 73 to 87 (NNPSTPRSSLTTATV) has biased composition (polar residues). One can recognise a PB1 domain in the interval 103-199 (SLFVKVYMEG…KRLRIARADD (97 aa)).

It belongs to the Aux/IAA family. Homodimers and heterodimers. Highly expressed in green shoots. Expressed in flowers.

Its subcellular location is the nucleus. Functionally, aux/IAA proteins are short-lived transcriptional factors that function as repressors of early auxin response genes at low auxin concentrations. The polypeptide is Auxin-responsive protein IAA8 (IAA8) (Oryza sativa subsp. japonica (Rice)).